A 228-amino-acid polypeptide reads, in one-letter code: Cytochrome c oxidase subunit 2 (228 aa).

The Mitochondrial intermembrane portion of the chain corresponds to 1 to 14 (MAYPFQLGFQDATS). Residues 15–45 (PIMEELLHFHDHTLMIVFLISSLVLYIISLM) form a helical membrane-spanning segment. Over 46-59 (LTTKLTHTSTMDAQ) the chain is Mitochondrial matrix. A helical membrane pass occupies residues 60 to 87 (EVETIWTILPAIILILIALPSLRILYMM). Over 88–228 (DEINNPALTV…FEKWSTSMLT (141 aa)) the chain is Mitochondrial intermembrane. The Cu cation site is built by His-161, Cys-196, Glu-198, Cys-200, His-204, and Met-207. Mg(2+) is bound at residue Glu-198. Tyr-218 carries the post-translational modification Phosphotyrosine.

It belongs to the cytochrome c oxidase subunit 2 family. As to quaternary structure, component of the cytochrome c oxidase (complex IV, CIV), a multisubunit enzyme composed of 14 subunits. The complex is composed of a catalytic core of 3 subunits MT-CO1, MT-CO2 and MT-CO3, encoded in the mitochondrial DNA, and 11 supernumerary subunits COX4I, COX5A, COX5B, COX6A, COX6B, COX6C, COX7A, COX7B, COX7C, COX8 and NDUFA4, which are encoded in the nuclear genome. The complex exists as a monomer or a dimer and forms supercomplexes (SCs) in the inner mitochondrial membrane with NADH-ubiquinone oxidoreductase (complex I, CI) and ubiquinol-cytochrome c oxidoreductase (cytochrome b-c1 complex, complex III, CIII), resulting in different assemblies (supercomplex SCI(1)III(2)IV(1) and megacomplex MCI(2)III(2)IV(2)). Found in a complex with TMEM177, COA6, COX18, COX20, SCO1 and SCO2. Interacts with TMEM177 in a COX20-dependent manner. Interacts with COX20. Interacts with COX16. It depends on Cu cation as a cofactor.

It localises to the mitochondrion inner membrane. It carries out the reaction 4 Fe(II)-[cytochrome c] + O2 + 8 H(+)(in) = 4 Fe(III)-[cytochrome c] + 2 H2O + 4 H(+)(out). Component of the cytochrome c oxidase, the last enzyme in the mitochondrial electron transport chain which drives oxidative phosphorylation. The respiratory chain contains 3 multisubunit complexes succinate dehydrogenase (complex II, CII), ubiquinol-cytochrome c oxidoreductase (cytochrome b-c1 complex, complex III, CIII) and cytochrome c oxidase (complex IV, CIV), that cooperate to transfer electrons derived from NADH and succinate to molecular oxygen, creating an electrochemical gradient over the inner membrane that drives transmembrane transport and the ATP synthase. Cytochrome c oxidase is the component of the respiratory chain that catalyzes the reduction of oxygen to water. Electrons originating from reduced cytochrome c in the intermembrane space (IMS) are transferred via the dinuclear copper A center (CU(A)) of subunit 2 and heme A of subunit 1 to the active site in subunit 1, a binuclear center (BNC) formed by heme A3 and copper B (CU(B)). The BNC reduces molecular oxygen to 2 water molecules using 4 electrons from cytochrome c in the IMS and 4 protons from the mitochondrial matrix. This chain is Cytochrome c oxidase subunit 2 (MT-CO2), found in Sus scrofa (Pig).